Reading from the N-terminus, the 379-residue chain is Succinyl-diaminopimelate desuccinylase (379 aa).

A Zn(2+)-binding site is contributed by His70. Asp72 is an active-site residue. Asp103 contacts Zn(2+). Glu137 (proton acceptor) is an active-site residue. 3 residues coordinate Zn(2+): Glu138, Glu166, and His352.

Belongs to the peptidase M20A family. DapE subfamily. As to quaternary structure, homodimer. It depends on Zn(2+) as a cofactor. The cofactor is Co(2+).

It catalyses the reaction N-succinyl-(2S,6S)-2,6-diaminopimelate + H2O = (2S,6S)-2,6-diaminopimelate + succinate. It functions in the pathway amino-acid biosynthesis; L-lysine biosynthesis via DAP pathway; LL-2,6-diaminopimelate from (S)-tetrahydrodipicolinate (succinylase route): step 3/3. In terms of biological role, catalyzes the hydrolysis of N-succinyl-L,L-diaminopimelic acid (SDAP), forming succinate and LL-2,6-diaminopimelate (DAP), an intermediate involved in the bacterial biosynthesis of lysine and meso-diaminopimelic acid, an essential component of bacterial cell walls. The sequence is that of Succinyl-diaminopimelate desuccinylase from Shewanella putrefaciens (strain CN-32 / ATCC BAA-453).